Here is a 919-residue protein sequence, read N- to C-terminus: Isoleucine--tRNA ligase (919 aa).

Positions 59 to 69 (PYANGHLHIGH) match the 'HIGH' region motif. Position 570 (Glu-570) interacts with L-isoleucyl-5'-AMP. Positions 611 to 615 (KMSKS) match the 'KMSKS' region motif. Residue Lys-614 participates in ATP binding. Cys-893, Cys-896, Cys-908, and Cys-911 together coordinate Zn(2+).

The protein belongs to the class-I aminoacyl-tRNA synthetase family. IleS type 1 subfamily. As to quaternary structure, monomer. Zn(2+) serves as cofactor.

The protein resides in the cytoplasm. The enzyme catalyses tRNA(Ile) + L-isoleucine + ATP = L-isoleucyl-tRNA(Ile) + AMP + diphosphate. In terms of biological role, catalyzes the attachment of isoleucine to tRNA(Ile). As IleRS can inadvertently accommodate and process structurally similar amino acids such as valine, to avoid such errors it has two additional distinct tRNA(Ile)-dependent editing activities. One activity is designated as 'pretransfer' editing and involves the hydrolysis of activated Val-AMP. The other activity is designated 'posttransfer' editing and involves deacylation of mischarged Val-tRNA(Ile). The protein is Isoleucine--tRNA ligase of Campylobacter curvus (strain 525.92).